The sequence spans 553 residues: Transcription factor GAMYB (553 aa).

A compositionally biased stretch (basic and acidic residues) spans 1–17 (MYRVKSESDCEMIHQEQ). The disordered stretch occupies residues 1–45 (MYRVKSESDCEMIHQEQMDSPVADDGSSGGSPHRGGGPPLKKGPW). The segment covering 27 to 38 (SSGGSPHRGGGP) has biased composition (gly residues). HTH myb-type domains are found at residues 37-89 (GPPL…ANHL) and 90-144 (RPNL…KRCQ). 2 DNA-binding regions (H-T-H motif) span residues 65–89 (WNAVQKNTGLFRCGKSCRLRWANHL) and 117–140 (WARMAAHLPGRTDNEIKNYWNTRI). The tract at residues 464-488 (PAQSTSMGSGEQVMGPKYEPGDTSP) is disordered.

The protein localises to the nucleus. Its function is as follows. Transcriptional activator of gibberellin-dependent alpha-amylase expression in aleurone cells. Involved in pollen and floral organs development. May bind to the 5'-TAACAAA-3' box of alpha-amylase promoter. In Oryza sativa subsp. indica (Rice), this protein is Transcription factor GAMYB (GAM1).